We begin with the raw amino-acid sequence, 1381 residues long: Hepatocyte growth factor receptor (1381 aa).

The signal sequence occupies residues 1–24; that stretch reads MKAPAVLTPGILLLLFTLVQKSNG. The Extracellular segment spans residues 25 to 932; that stretch reads ECKEALTKSE…VIVQPDQNFT (908 aa). The Sema domain occupies 27–515; the sequence is KEALTKSEMN…TGKKITKIPL (489 aa). The N-linked (GlcNAc...) asparagine glycan is linked to N45. 4 disulfide bridges follow: C95/C101, C98/C160, C133/C141, and C172/C175. N-linked (GlcNAc...) asparagine glycosylation occurs at N106. A glycan (N-linked (GlcNAc...) asparagine) is linked at N149. A glycan (N-linked (GlcNAc...) asparagine) is linked at N202. 2 disulfides stabilise this stretch: C298/C363 and C385/C397. Residue N399 is glycosylated (N-linked (GlcNAc...) asparagine). 4 disulfide bridges follow: C520/C538, C526/C561, C529/C545, and C541/C551. IPT/TIG domains are found at residues 563-655, 657-739, and 742-836; these read PTIY…FSYV, PIIT…FSYR, and PIVY…LIYV. A glycan (O-linked (Man) threonine) is linked at T582. N-linked (GlcNAc...) asparagine glycosylation is found at N607 and N635. T676 and T761 each carry an O-linked (Man) threonine glycan. Residues N785, N879, and N930 are each glycosylated (N-linked (GlcNAc...) asparagine). Residues 933 to 955 form a helical membrane-spanning segment; the sequence is GLIAGVVSISIALLLLLGLFLWL. At 956–1381 the chain is on the cytoplasmic side; the sequence is KKRKQIKDLG…QDNADGELDT (426 aa). Position 966 is a phosphoserine (S966). Phosphothreonine is present on T977. Phosphoserine occurs at positions 990, 997, and 1000. Y1003 is subject to Phosphotyrosine. Residues 1078 to 1345 form the Protein kinase domain; that stretch reads VHFNEVIGRG…RISAIFSTFI (268 aa). ATP-binding positions include 1084–1092 and K1110; that span reads IGRGHFGCV. D1204 serves as the catalytic Proton acceptor. An interaction with RANBP9 region spans residues 1212–1381; it reads LDEKFTVKVA…QDNADGELDT (170 aa). Y1230 is modified (phosphotyrosine). Phosphotyrosine; by autocatalysis is present on residues Y1234 and Y1235. Residue T1289 is modified to Phosphothreonine. Residues 1320–1359 form an interaction with MUC20 region; the sequence is WHPKAEMRPSFSELVSRISAIFSTFIGEHYVHVNATYVNV. 2 positions are modified to phosphotyrosine; by autocatalysis: Y1349 and Y1356. Y1365 is subject to Phosphotyrosine.

The protein belongs to the protein kinase superfamily. Tyr protein kinase family. As to quaternary structure, heterodimer made of an alpha chain (50 kDa) and a beta chain (145 kDa) which are disulfide linked. Binds PLXNB1. Interacts when phosphorylated with downstream effectors including STAT3, PIK3R1, SRC, PCLG1, GRB2 and GAB1. Interacts with SPSB1, SPSB2 and SPSB4. Interacts with INPP5D/SHIP1. When phosphorylated at Tyr-1356, interacts with INPPL1/SHIP2. Interacts with RANBP9 and RANBP10, as well as SPSB1, SPSB2, SPSB3 and SPSB4. SPSB1 binding occurs in the presence and in the absence of HGF, however HGF treatment has a positive effect on this interaction. Interacts with MUC20; prevents interaction with GRB2 and suppresses hepatocyte growth factor-induced cell proliferation. Interacts with GRB10. Interacts with PTPN1 and PTPN2. Interacts with HSP90AA1 and HSP90AB1; the interaction suppresses MET kinase activity. Interacts with tensin TNS3. Interacts (when phosphorylated) with tensin TNS4 (via SH2 domain); the interaction increases MET protein stability by inhibiting MET endocytosis and subsequent lysosomal degradation. In terms of processing, autophosphorylated in response to ligand binding on Tyr-1234 and Tyr-1235 in the kinase domain leading to further phosphorylation of Tyr-1349 and Tyr-1356 in the C-terminal multifunctional docking site. Dephosphorylated by PTPRJ at Tyr-1349 and Tyr-1365. Dephosphorylated by PTPN1 and PTPN2. Ubiquitinated. Ubiquitination by CBL regulates the receptor stability and activity through proteasomal degradation. Post-translationally, O-mannosylation of IPT/TIG domains by TMEM260 is required for protein maturation. O-mannosylated residues are composed of single mannose glycans that are not elongated or modified.

The protein localises to the membrane. The catalysed reaction is L-tyrosyl-[protein] + ATP = O-phospho-L-tyrosyl-[protein] + ADP + H(+). With respect to regulation, in its inactive state, the C-terminal tail interacts with the catalytic domain and inhibits the kinase activity. Upon ligand binding, the C-terminal tail is displaced and becomes phosphorylated, thus increasing the kinase activity. Receptor tyrosine kinase that transduces signals from the extracellular matrix into the cytoplasm by binding to hepatocyte growth factor/HGF ligand. Regulates many physiological processes including proliferation, scattering, morphogenesis and survival. Ligand binding at the cell surface induces autophosphorylation of MET on its intracellular domain that provides docking sites for downstream signaling molecules. Following activation by ligand, interacts with the PI3-kinase subunit PIK3R1, PLCG1, SRC, GRB2, STAT3 or the adapter GAB1. Recruitment of these downstream effectors by MET leads to the activation of several signaling cascades including the RAS-ERK, PI3 kinase-AKT, or PLCgamma-PKC. The RAS-ERK activation is associated with the morphogenetic effects while PI3K/AKT coordinates prosurvival effects. During embryonic development, MET signaling plays a role in gastrulation, development and migration of muscles and neuronal precursors, angiogenesis and kidney formation. In adults, participates in wound healing as well as organ regeneration and tissue remodeling. Also promotes differentiation and proliferation of hematopoietic cells. The protein is Hepatocyte growth factor receptor (MET) of Saimiri boliviensis boliviensis (Bolivian squirrel monkey).